The primary structure comprises 519 residues: GMP synthase [glutamine-hydrolyzing] (519 aa).

Positions 4 to 201 (AILILDFGSQ…VHDICDAGYD (198 aa)) constitute a Glutamine amidotransferase type-1 domain. The Nucleophile role is filled by Cys81. Active-site residues include His175 and Glu177. The GMPS ATP-PPase domain occupies 202 to 394 (WNMPDYVEEA…LGLPRDLVFR (193 aa)). 229–235 (SGGVDSS) serves as a coordination point for ATP.

Homodimer.

It carries out the reaction XMP + L-glutamine + ATP + H2O = GMP + L-glutamate + AMP + diphosphate + 2 H(+). It participates in purine metabolism; GMP biosynthesis; GMP from XMP (L-Gln route): step 1/1. Catalyzes the synthesis of GMP from XMP. The chain is GMP synthase [glutamine-hydrolyzing] from Nitrosomonas eutropha (strain DSM 101675 / C91 / Nm57).